The chain runs to 159 residues: uncharacterized protein (159 aa).

Belongs to the IIV-6 136R family.

This is an uncharacterized protein from Invertebrate iridescent virus 3 (IIV-3).